The following is a 639-amino-acid chain: uncharacterized protein (639 aa).

A signal peptide spans 1–16 (MLTLYLFTATCCFVCA). Disordered stretches follow at residues 80–128 (RRRA…SDKL) and 432–488 (QTAT…TSRT). Composition is skewed to polar residues over residues 108–122 (TYAT…TASP) and 432–446 (QTAT…QQQP). A compositionally biased stretch (basic and acidic residues) spans 465–480 (HGDEPHSDGELRRESH).

This is an uncharacterized protein from Human cytomegalovirus (strain Merlin) (HHV-5).